Consider the following 328-residue polypeptide: Lipoyl synthase (328 aa).

[4Fe-4S] cluster is bound by residues Cys-56, Cys-61, Cys-67, Cys-82, Cys-86, Cys-89, and Ser-293. In terms of domain architecture, Radical SAM core spans 68–282; the sequence is WEDREATFLI…ERVGAELGFS (215 aa).

This sequence belongs to the radical SAM superfamily. Lipoyl synthase family. The cofactor is [4Fe-4S] cluster.

The protein localises to the cytoplasm. The enzyme catalyses [[Fe-S] cluster scaffold protein carrying a second [4Fe-4S](2+) cluster] + N(6)-octanoyl-L-lysyl-[protein] + 2 oxidized [2Fe-2S]-[ferredoxin] + 2 S-adenosyl-L-methionine + 4 H(+) = [[Fe-S] cluster scaffold protein] + N(6)-[(R)-dihydrolipoyl]-L-lysyl-[protein] + 4 Fe(3+) + 2 hydrogen sulfide + 2 5'-deoxyadenosine + 2 L-methionine + 2 reduced [2Fe-2S]-[ferredoxin]. The protein operates within protein modification; protein lipoylation via endogenous pathway; protein N(6)-(lipoyl)lysine from octanoyl-[acyl-carrier-protein]: step 2/2. Its function is as follows. Catalyzes the radical-mediated insertion of two sulfur atoms into the C-6 and C-8 positions of the octanoyl moiety bound to the lipoyl domains of lipoate-dependent enzymes, thereby converting the octanoylated domains into lipoylated derivatives. This is Lipoyl synthase from Frankia alni (strain DSM 45986 / CECT 9034 / ACN14a).